The sequence spans 377 residues: Phosphatidylglycerol--prolipoprotein diacylglyceryl transferase (377 aa).

Transmembrane regions (helical) follow at residues 18–38 (PVPLRAYALMIIIGIVVAVVV), 48–68 (MDPALAGEIAYWAVPFGIVGA), 93–113 (IWNGGLGIWGAIAGGALGAWL), and 119–139 (GISLALFADAAAPGIILAQAI). Residue Arg141 participates in a 1,2-diacyl-sn-glycero-3-phospho-(1'-sn-glycerol) binding. Transmembrane regions (helical) follow at residues 177–197 (QPTFLYEFLWNLVVAAILLLV), 208–228 (LFALYVALYTFGRLWIEMLRI), and 238–258 (RVNIWTSAIVCVGAVVALLVV). Residues 265–377 (DVSPQEQRAL…RTRVERPPAT (113 aa)) form a disordered region. Low complexity-rich tracts occupy residues 288 to 297 (AAGETAGETR) and 308 to 344 (GVDVNGADVDGADPSNVNGANVNGADPVNVNVNDADG).

This sequence belongs to the Lgt family.

Its subcellular location is the cell membrane. It catalyses the reaction L-cysteinyl-[prolipoprotein] + a 1,2-diacyl-sn-glycero-3-phospho-(1'-sn-glycerol) = an S-1,2-diacyl-sn-glyceryl-L-cysteinyl-[prolipoprotein] + sn-glycerol 1-phosphate + H(+). The protein operates within protein modification; lipoprotein biosynthesis (diacylglyceryl transfer). Catalyzes the transfer of the diacylglyceryl group from phosphatidylglycerol to the sulfhydryl group of the N-terminal cysteine of a prolipoprotein, the first step in the formation of mature lipoproteins. In Frankia alni (strain DSM 45986 / CECT 9034 / ACN14a), this protein is Phosphatidylglycerol--prolipoprotein diacylglyceryl transferase.